The sequence spans 117 residues: MLASYCHVNRPFARKIPSLSAIIFESIDNDKKSKFMLDLQNRHGSLIDFKMSIEEYKMVHYSNIYVLIMLEITRFDRFLDKDDTQKLEYIAKQDDDCEFYKAIYQCNFKHGDIYAYG.

The protein belongs to the mimivirus R69 family.

This is an uncharacterized protein from Acanthamoeba polyphaga mimivirus (APMV).